Consider the following 132-residue polypeptide: Antimicrobial protein Ace-AMP1 (132 aa).

The N-terminal stretch at 1–27 (MVRVVSLLAASTFILLIMIISSPYANS) is a signal peptide. 4 cysteine pairs are disulfide-bonded: Cys31–Cys76, Cys41–Cys54, Cys55–Cys100, and Cys74–Cys116.

This sequence belongs to the plant LTP family. Highly divergent. In terms of assembly, monomer.

Its function is as follows. Antifungal and antibacterial activity against the Gram-positive bacteria B.megaterium and S.lutea. This is Antimicrobial protein Ace-AMP1 from Allium cepa (Onion).